A 306-amino-acid polypeptide reads, in one-letter code: Non-specific ribonucleoside hydrolase RihC (306 aa).

His-235 is an active-site residue.

This sequence belongs to the IUNH family. RihC subfamily.

Hydrolyzes both purine and pyrimidine ribonucleosides with a broad-substrate specificity. In Salmonella typhi, this protein is Non-specific ribonucleoside hydrolase RihC.